Consider the following 54-residue polypeptide: MARNEIRPLVKLRSTAGTGYTYITRKNRRNDPDRITLRKYDPVVRRHVDFREER.

It belongs to the bacterial ribosomal protein bL33 family.

This Mycolicibacterium vanbaalenii (strain DSM 7251 / JCM 13017 / BCRC 16820 / KCTC 9966 / NRRL B-24157 / PYR-1) (Mycobacterium vanbaalenii) protein is Large ribosomal subunit protein bL33B.